The following is a 342-amino-acid chain: Galactose mutarotase (342 aa).

Residues 81–82 (NR) and His-107 each bind beta-D-galactose. Ser-124 is subject to Phosphoserine. Catalysis depends on His-176, which acts as the Proton donor. Beta-D-galactose-binding positions include 176-178 (HSY), Asp-243, Gln-279, and Glu-307. Glu-307 (proton acceptor) is an active-site residue.

Belongs to the aldose epimerase family. Monomer.

It localises to the cytoplasm. The enzyme catalyses alpha-D-galactose = beta-D-galactose. It carries out the reaction alpha-D-glucose = beta-D-glucose. Its pathway is carbohydrate metabolism; hexose metabolism. The protein operates within carbohydrate metabolism; galactose metabolism. Its function is as follows. Mutarotase that catalyzes the interconversion of beta-D-galactose and alpha-D-galactose during galactose metabolism. Beta-D-galactose is metabolized in the liver into glucose 1-phosphate, the primary metabolic fuel, by the action of four enzymes that constitute the Leloir pathway: GALM, GALK1 (galactokinase), GALT (galactose-1-phosphate uridylyltransferase) and GALE (UDP-galactose-4'-epimerase). Involved in the maintenance of the equilibrium between the beta- and alpha-anomers of galactose, therefore ensuring a sufficient supply of the alpha-anomer for GALK1. Also active on D-glucose although shows a preference for galactose over glucose. The protein is Galactose mutarotase (GALM) of Bos taurus (Bovine).